The sequence spans 273 residues: MRFSAIFTLGLAGTALATPLVERAGSSPTDIISGISDKTDALDSAIKAYNGGDPSKVESASADLISTITKGTDAIKSGDDISTTDALALPEPVQALTKKVEQAIDDIIAKKDKFVEAGAGGKVKDSLNQQKSAADGLASAITSKVPESLKEIAQSLSAGISTAIQKGVDAYKDVSDSAPSSSAGSSASATATGSASETGSASTTGSASATSSSVIPTSSGAASSSAAPSGSSTPTGSGSASATSPPLATGAANKATIGYSLGAVAMAAIAVAV.

Residues Met1 to Ala17 form the signal peptide. The segment at Asp173–Leu247 is disordered. Low complexity predominate over residues Ser177 to Leu247.

Belongs to the cell wall mannoprotein 1 family. In terms of processing, galactomannoprotein, glycosylated.

The protein resides in the secreted. It localises to the cell wall. Constitutive protein of the cell wall. Antigen target of host humoral immune response. In Aspergillus flavus, this protein is Cell wall mannoprotein 1.